The sequence spans 213 residues: Methylthioribulose-1-phosphate dehydratase (213 aa).

Zn(2+) contacts are provided by His104 and His106.

The protein belongs to the aldolase class II family. MtnB subfamily. It depends on Zn(2+) as a cofactor.

The enzyme catalyses 5-(methylsulfanyl)-D-ribulose 1-phosphate = 5-methylsulfanyl-2,3-dioxopentyl phosphate + H2O. It functions in the pathway amino-acid biosynthesis; L-methionine biosynthesis via salvage pathway; L-methionine from S-methyl-5-thio-alpha-D-ribose 1-phosphate: step 2/6. In terms of biological role, catalyzes the dehydration of methylthioribulose-1-phosphate (MTRu-1-P) into 2,3-diketo-5-methylthiopentyl-1-phosphate (DK-MTP-1-P). The protein is Methylthioribulose-1-phosphate dehydratase of Stenotrophomonas maltophilia (strain R551-3).